The chain runs to 314 residues: Acetyl-coenzyme A carboxylase carboxyl transferase subunit alpha (314 aa).

A CoA carboxyltransferase C-terminal domain is found at 32 to 289 (EIDMLEASLK…KKMFLKHLNE (258 aa)).

This sequence belongs to the AccA family. As to quaternary structure, acetyl-CoA carboxylase is a heterohexamer composed of biotin carboxyl carrier protein (AccB), biotin carboxylase (AccC) and two subunits each of ACCase subunit alpha (AccA) and ACCase subunit beta (AccD).

It is found in the cytoplasm. The enzyme catalyses N(6)-carboxybiotinyl-L-lysyl-[protein] + acetyl-CoA = N(6)-biotinyl-L-lysyl-[protein] + malonyl-CoA. The protein operates within lipid metabolism; malonyl-CoA biosynthesis; malonyl-CoA from acetyl-CoA: step 1/1. Its function is as follows. Component of the acetyl coenzyme A carboxylase (ACC) complex. First, biotin carboxylase catalyzes the carboxylation of biotin on its carrier protein (BCCP) and then the CO(2) group is transferred by the carboxyltransferase to acetyl-CoA to form malonyl-CoA. This is Acetyl-coenzyme A carboxylase carboxyl transferase subunit alpha from Staphylococcus epidermidis (strain ATCC 12228 / FDA PCI 1200).